Reading from the N-terminus, the 465-residue chain is UDP-glycosyltransferase TURAN (465 aa).

Topologically, residues 1–75 (MGKRGRACVV…FIQYFPKILY (75 aa)) are cytoplasmic. Residues 76 to 96 (PVTLLLKAFIQFTMLLWFLFV) form a helical membrane-spanning segment. The Lumenal portion of the chain corresponds to 97–465 (KVPAPDIFLV…TQVVSQIADS (369 aa)). N-linked (GlcNAc...) asparagine glycosylation is present at asparagine 238.

The protein belongs to the glycosyltransferase group 1 family. Glycosyltransferase 33 subfamily.

The protein resides in the endoplasmic reticulum membrane. It functions in the pathway protein modification; protein glycosylation. Its function is as follows. Required for pollen tube (PT) growth and integrity by affecting the stability of the pollen-specific ANX1 and ANX2 proteins. Involved in protein N-glycosylation in the endoplasmic reticulum (ER), especially in the female gametophyte. Mediates PT reception in synergids through protein glycosylation. The protein is UDP-glycosyltransferase TURAN of Arabidopsis thaliana (Mouse-ear cress).